Here is a 409-residue protein sequence, read N- to C-terminus: Elongation factor Tu, plastid (409 aa).

Residues 10 to 214 (KPHINIGTIG…SVDSYIPTPV (205 aa)) enclose the tr-type G domain. The tract at residues 19-26 (GHVDHGKT) is G1. GTP is bound at residue 19 to 26 (GHVDHGKT). Thr-26 provides a ligand contact to Mg(2+). The interval 60–64 (GITIN) is G2. The G3 stretch occupies residues 81 to 84 (DCPG). GTP-binding positions include 81–85 (DCPGH) and 136–139 (NKED). The G4 stretch occupies residues 136–139 (NKED). The segment at 174–176 (SAL) is G5.

The protein belongs to the TRAFAC class translation factor GTPase superfamily. Classic translation factor GTPase family. EF-Tu/EF-1A subfamily.

The protein localises to the plastid. It carries out the reaction GTP + H2O = GDP + phosphate + H(+). Its function is as follows. GTP hydrolase that promotes the GTP-dependent binding of aminoacyl-tRNA to the A-site of ribosomes during protein biosynthesis. The polypeptide is Elongation factor Tu, plastid (tufA) (Helicosporidium sp. subsp. Simulium jonesii (Green alga)).